The primary structure comprises 139 residues: D-ribose pyranase (139 aa).

The Proton donor role is filled by His-20. Substrate contacts are provided by residues Asp-28, His-106, and 128 to 130 (YAN).

It belongs to the RbsD / FucU family. RbsD subfamily. As to quaternary structure, homodecamer.

It localises to the cytoplasm. The catalysed reaction is beta-D-ribopyranose = beta-D-ribofuranose. It participates in carbohydrate metabolism; D-ribose degradation; D-ribose 5-phosphate from beta-D-ribopyranose: step 1/2. Functionally, catalyzes the interconversion of beta-pyran and beta-furan forms of D-ribose. The polypeptide is D-ribose pyranase (Vibrio cholerae serotype O1 (strain ATCC 39541 / Classical Ogawa 395 / O395)).